We begin with the raw amino-acid sequence, 860 residues long: Pentatricopeptide repeat-containing protein At2g40720 (860 aa).

20 PPR repeats span residues 59–93 (SVFT…GWRY), 94–124 (DPFI…WSQS), 132–166 (DVTV…GVRP), 167–203 (DAFS…SLDT), 204–234 (DSFL…IEDK), 236–270 (NVVL…SVKL), 271–305 (VSTS…GLHN), 306–340 (DPYV…RLEI), 341–371 (WNAM…SVLP), 372–406 (DSFT…PIQS), 407–437 (TSTI…MEEK), 438–472 (DMVA…DDSL), 475–509 (DSDI…GLVL), 510–540 (NVFV…MSTE), 541–575 (NMVA…GIFP), 576–610 (DSVS…GIPS), 611–641 (DTHL…MQHK), 642–676 (SLIT…GESP), 677–707 (DDVT…MKQD), and 713–743 (NMEH…MPIE). The type E motif stretch occupies residues 748–823 (IWLCLLSASR…QPGCSWIEVS (76 aa)). The segment at 824–854 (DRTNVFFSGGSSSPMKAEIFNVLNRLKSNMV) is type E(+) motif.

This sequence belongs to the PPR family. PCMP-E subfamily.

The polypeptide is Pentatricopeptide repeat-containing protein At2g40720 (PCMP-E26) (Arabidopsis thaliana (Mouse-ear cress)).